The following is a 240-amino-acid chain: Large ribosomal subunit protein uL2 (240 aa).

Polar residues predominate over residues 1 to 11 (MGKRLISQNRG). Disordered stretches follow at residues 1–26 (MGKR…KRKG) and 206–240 (GGGR…TGRK). Composition is skewed to basic residues over residues 13–26 (GTPK…KRKG) and 228–240 (KVGH…TGRK).

It belongs to the universal ribosomal protein uL2 family. In terms of assembly, part of the 50S ribosomal subunit. Forms a bridge to the 30S subunit in the 70S ribosome.

Functionally, one of the primary rRNA binding proteins. Required for association of the 30S and 50S subunits to form the 70S ribosome, for tRNA binding and peptide bond formation. It has been suggested to have peptidyltransferase activity; this is somewhat controversial. Makes several contacts with the 16S rRNA in the 70S ribosome. The polypeptide is Large ribosomal subunit protein uL2 (Methanococcus vannielii (strain ATCC 35089 / DSM 1224 / JCM 13029 / OCM 148 / SB)).